The following is a 257-amino-acid chain: Short chain dehydrogenase prhI (257 aa).

A helical transmembrane segment spans residues 7–29 (HVVIITGSSSGIGLAASTLALAS). An NADP(+)-binding site is contributed by Ile11. N-linked (GlcNAc...) asparagine glycosylation is present at Asn50. Residue Asp57 participates in NADP(+) binding. N-linked (GlcNAc...) asparagine glycans are attached at residues Asn92 and Asn110. NADP(+) is bound by residues Arg119, Tyr151, Lys155, and Val184. Tyr151 acts as the Proton acceptor in catalysis. The Lowers pKa of active site Tyr role is filled by Lys155.

This sequence belongs to the short-chain dehydrogenases/reductases (SDR) family.

It is found in the membrane. The catalysed reaction is protoaustinoid A + A = protoaustinoid B + AH2. It participates in secondary metabolite biosynthesis; terpenoid biosynthesis. Its function is as follows. Short chain dehydrogenase; part of the gene cluster that mediates the biosynthesis of paraherquonin, a meroterpenoid with a unique, highly congested hexacyclic molecular architecture. The first step of the pathway is the synthesis of 3,5-dimethylorsellinic acid (DMOA) by the polyketide synthase prhL. Synthesis of DMOA is followed by farnesylation by the prenyltransferase prhE, methylesterification by the methyl-transferase prhM, epoxidation of the prenyl chain by the flavin-dependent monooxygenase prhF, and cyclization of the farnesyl moiety by the terpene cyclase prhH, to yield the tetracyclic intermediate, protoaustinoid A. The short chain dehydrogenase prhI then oxidizes the C-3 alcohol group of the terpene cyclase product to transform protoaustinoid A into protoaustinoid B. The FAD-binding monooxygenase prhJ catalyzes the oxidation of protoaustinoid B into preaustinoid A which is further oxidized into preaustinoid A1 by FAD-binding monooxygenase phrK. Finally, prhA leads to berkeleydione via the berkeleyone B intermediate. PrhA is a multifunctional dioxygenase that first desaturates at C5-C6 to form berkeleyone B, followed by rearrangement of the A/B-ring to form the cycloheptadiene moiety in berkeleydione. Berkeleydione serves as the key intermediate for the biosynthesis of paraherquonin as well as many other meroterpenoids. The cytochrome P450 monooxygenases prhB, prhD, and prhN, as well as the isomerase prhC, are probably involved in the late stage of paraherquonin biosynthesis, after the production of berkeleydione. Especially prhC might be a multifunctional enzyme that catalyzes the D-ring expansion via intramolecular methoxy rearrangement, as well as the hydrolysis of the expanded D-ring. This is Short chain dehydrogenase prhI from Penicillium brasilianum.